Reading from the N-terminus, the 139-residue chain is ATP synthase epsilon chain (139 aa).

It belongs to the ATPase epsilon chain family. As to quaternary structure, F-type ATPases have 2 components, CF(1) - the catalytic core - and CF(0) - the membrane proton channel. CF(1) has five subunits: alpha(3), beta(3), gamma(1), delta(1), epsilon(1). CF(0) has three main subunits: a, b and c.

Its subcellular location is the cell inner membrane. In terms of biological role, produces ATP from ADP in the presence of a proton gradient across the membrane. This is ATP synthase epsilon chain from Pseudomonas putida (strain ATCC 700007 / DSM 6899 / JCM 31910 / BCRC 17059 / LMG 24140 / F1).